We begin with the raw amino-acid sequence, 119 residues long: Large ribosomal subunit protein uL14 (119 aa).

The protein belongs to the universal ribosomal protein uL14 family. Part of the 50S ribosomal subunit. Forms a cluster with proteins L3 and L19. In the 70S ribosome, L14 and L19 interact and together make contacts with the 16S rRNA in bridges B5 and B8.

Binds to 23S rRNA. Forms part of two intersubunit bridges in the 70S ribosome. The chain is Large ribosomal subunit protein uL14 from Neorickettsia sennetsu (strain ATCC VR-367 / Miyayama) (Ehrlichia sennetsu).